We begin with the raw amino-acid sequence, 183 residues long: uncharacterized protein (183 aa).

The next 4 membrane-spanning stretches (helical) occupy residues 13-35 (KALL…LTYS), 60-82 (LLIL…KLRF), 117-139 (FEPV…YAIF), and 149-171 (LLFY…LYLS).

Its subcellular location is the cell membrane. This is an uncharacterized protein from Archaeoglobus fulgidus (strain ATCC 49558 / DSM 4304 / JCM 9628 / NBRC 100126 / VC-16).